We begin with the raw amino-acid sequence, 345 residues long: Large ribosomal subunit protein uL10 (345 aa).

Residues 303 to 345 (SLPQTAAPQQTPQPTEAPKEEAQEEKKEGPSEEEIAGSLASLF) are disordered. The span at 305–318 (PQTAAPQQTPQPTE) shows a compositional bias: low complexity. Over residues 319-332 (APKEEAQEEKKEGP) the composition is skewed to basic and acidic residues.

This sequence belongs to the universal ribosomal protein uL10 family. As to quaternary structure, part of the 50S ribosomal subunit. Forms part of the ribosomal stalk which helps the ribosome interact with GTP-bound translation factors. Forms a heptameric L10(L12)2(L12)2(L12)2 complex, where L10 forms an elongated spine to which the L12 dimers bind in a sequential fashion.

Its function is as follows. Forms part of the ribosomal stalk, playing a central role in the interaction of the ribosome with GTP-bound translation factors. The chain is Large ribosomal subunit protein uL10 from Pyrobaculum aerophilum (strain ATCC 51768 / DSM 7523 / JCM 9630 / CIP 104966 / NBRC 100827 / IM2).